The following is a 280-amino-acid chain: Myelin proteolipid protein B (280 aa).

The Cytoplasmic segment spans residues 1–10; the sequence is MGWHDGCIRC. Residues Cys-7 and Cys-10 are each lipidated (S-palmitoyl cysteine). A helical membrane pass occupies residues 11 to 36; the sequence is MVGVPFASVIATVLCFAGVALFCGCG. At 37-59 the chain is on the extracellular side; sequence HEALSGTEKLIETYFSKNYQEYE. The chain crosses the membrane as a helical span at residues 60–88; sequence YLIHVINAFQYVIYGIAIFFFLYGILLLA. Topologically, residues 89–152 are cytoplasmic; sequence EGFYTTTAIK…LGKWLGHPDK (64 aa). 2 S-palmitoyl cysteine lipidation sites follow: Cys-140 and Cys-142. Residues 153 to 179 traverse the membrane as a helical segment; it reads FVGVTYVITILWILIFACSAVPVYIYF. Residues 180–239 lie on the Extracellular side of the membrane; that stretch reads NTWVTCQSIAFPGKTTTSVSTLCLDARMYGVLPWNAFPGKVCGTSLLAICKTSEFQMTFH. Intrachain disulfides connect Cys-185–Cys-229 and Cys-202–Cys-221. The helical transmembrane segment at 240 to 269 threads the bilayer; sequence LFIAAFVGAAATLVALLTYMVGASFNYAVL. Residues 270 to 280 are Cytoplasmic-facing; it reads RVTGRSDRSKF.

It belongs to the myelin proteolipid protein family.

It localises to the cell membrane. Its function is as follows. This is the major myelin protein from the central nervous system. It plays an important role in the formation or maintenance of the multilamellar structure of myelin. This Xenopus laevis (African clawed frog) protein is Myelin proteolipid protein B (plp1-b).